The chain runs to 598 residues: Arylsulfate sulfotransferase AssT (598 aa).

A signal peptide spans 1-27; that stretch reads MFHPYRKTLLSGTVALALGLFATGAIA. 4-methylumbelliferone is bound by residues histidine 279 and histidine 383. A disulfide bridge connects residues cysteine 445 and cysteine 451. Residue histidine 463 participates in 4-methylumbelliferone binding. Histidine 463 functions as the Nucleophile; sulfurylated histidine covalent intermediate in the catalytic mechanism.

The protein belongs to the aryl sulfotransferase family. As to quaternary structure, monomer.

The protein localises to the periplasm. The enzyme catalyses an aryl sulfate + a phenol = an aryl sulfate + a phenol. It catalyses the reaction 4-methylumbelliferone sulfate + phenol = phenyl sulfate + 4-methylumbelliferone. It carries out the reaction 2-naphthyl sulfate + phenol = phenyl sulfate + 2-naphthol. In terms of biological role, catalyzes the transfer of a sulfate group from a phenyl sulfate ester to other phenolic compounds. Is able to use several substrate donors and acceptors in vitro: using phenol as an acceptor substrate, 4-methylumbelliferyl sulfate is the best donor substrate, followed by beta-naphthyl sulfate, p-nitrophenyl sulfate (PNS), and alpha-naphthyl sulfate; using PNS as a donor substrate, alpha-naphthol is the best acceptor substrate, followed by phenol, resorcinol, p-acetaminophen, tyramine, and tyrosine. Cannot use 3'-phosphoadenosine-5'-phophosulfate (PAPS), the donor substrate of mammalian sulfotransferase. May be a detoxifying enzyme, converting toxic phenolic compounds into non-toxic materials. This chain is Arylsulfate sulfotransferase AssT, found in Lelliottia amnigena (Enterobacter amnigenus).